A 740-amino-acid polypeptide reads, in one-letter code: MLKLFSAFRKNKIWDFNGGIHPPEMKTQSNGTPLRQVPLAQRFVIPLKQHIGAEGELCVSVGDKVLRGQPLTRGRGKMLPVHAPTSGTVTAIAPHSTAHPSALAELSVIIDADGEDCWIPRDGWDDYRSRSREELIERIHKFGVAGLGGAGFPTGVKLQGGGDKIETLIINAAECEPYITADDRLMQDCAAQVVEGIRILAHILQPREILIGIEDNKPQAISMLRAVLADSHDISLRVIPTKYPSGGAKQLTYILTGKQVPHGGRSSDIGVLMQNVGTAYAVKRAVIDGEPITERVVTLTGEAIARPGNVWARLGTPVRHLLNDAGFCPSADQMVIMGGPLMGFTLPWLDVPVVKITNCLLAPSANELGEPQEEQSCIRCSACADACPADLLPQQLYWFSKGQQHDKATTHNIADCIECGACAWVCPSNIPLVQYFRQEKAEIAAIRQEEKRAAEAKARFEARQARLEREKAARLERHKSAAVQPAAKDKDAIAAALARVKEKQAQATQPIVIKAGERPDNSAIIAAREARKAQARAKQAKLQQTNDAATVADPRKTAVEAAIARAKARKLEQQQANAEPEQQVDPRKAAVEAAIARAKARKLEQQQANAEPEQQVDPRKAAVEAAIARAKARKLEQQQANAEPEQQVDPRKAAVEAAIARAKARKLEQQQANAEPEEQVDPRKAAVEAAIARAKARKLEQKQANAVPEEQVDPRKAAVAAAIARVQAKKAAQQKVVNED.

4Fe-4S ferredoxin-type domains lie at 369–397 (GEPQ…QQLY) and 407–436 (KATT…VQYF). Cys377, Cys380, Cys383, Cys387, Cys416, Cys419, Cys422, and Cys426 together coordinate [4Fe-4S] cluster. A disordered region spans residues 602-684 (KLEQQQANAE…EPEEQVDPRK (83 aa)). Low complexity-rich tracts occupy residues 605–615 (QQQANAEPEQQ) and 637–647 (QQQANAEPEQQ).

It belongs to the 4Fe4S bacterial-type ferredoxin family. RnfC subfamily. The complex is composed of six subunits: RsxA, RsxB, RsxC, RsxD, RsxE and RsxG. It depends on [4Fe-4S] cluster as a cofactor.

It localises to the cell inner membrane. Part of a membrane-bound complex that couples electron transfer with translocation of ions across the membrane. Required to maintain the reduced state of SoxR. In Escherichia coli O7:K1 (strain IAI39 / ExPEC), this protein is Ion-translocating oxidoreductase complex subunit C.